A 239-amino-acid polypeptide reads, in one-letter code: tRNA (guanine-N(7)-)-methyltransferase (239 aa).

The S-adenosyl-L-methionine site is built by Glu69, Glu94, Asp121, and Asp144. Residue Asp144 is part of the active site. Lys148 serves as a coordination point for substrate. The interaction with RNA stretch occupies residues 150-155; sequence RHNKRR. Residues Asp180 and 217–220 contribute to the substrate site; that span reads TKFE.

Belongs to the class I-like SAM-binding methyltransferase superfamily. TrmB family. As to quaternary structure, monomer.

The enzyme catalyses guanosine(46) in tRNA + S-adenosyl-L-methionine = N(7)-methylguanosine(46) in tRNA + S-adenosyl-L-homocysteine. The protein operates within tRNA modification; N(7)-methylguanine-tRNA biosynthesis. Catalyzes the formation of N(7)-methylguanine at position 46 (m7G46) in tRNA. The protein is tRNA (guanine-N(7)-)-methyltransferase of Escherichia coli O6:K15:H31 (strain 536 / UPEC).